The sequence spans 463 residues: Protein translocase subunit SecY (463 aa).

Residues 1-20 (MGFMDFLAKMGENLPAVSKP) are Cytoplasmic-facing. A helical membrane pass occupies residues 21 to 47 (KDKPTLTRKLLWTFIGLIVYLLMASIP). Topologically, residues 48–60 (LYGVTSSNSFLSN) are extracellular. The segment at residues 61–68 (FLAQQIIF) is an intramembrane region (helical). A discontinuously helical membrane pass occupies residues 61-89 (FLAQQIIFASSQGTLAQLGIGPVITSGLI). An intramembrane segment occupies 69 to 80 (ASSQGTLAQLGI). An intramembrane region (helical) is located at residues 81–89 (GPVITSGLI). At 90-110 (MQILVGSKLINVDLTTQEGKS) the chain is on the cytoplasmic side. The chain crosses the membrane as a helical span at residues 111–134 (KFTQAEKALALIFIIVESSLFGYV). Topologically, residues 135 to 142 (FTRATSNI) are extracellular. A helical transmembrane segment spans residues 143–167 (LLPIIVVVQLIIASYIILLLDEMIQ). The Cytoplasmic segment spans residues 168–174 (KGWGLGS). A helical transmembrane segment spans residues 175 to 193 (GVSLFIMAGIMKVIFWNMF). At 194 to 236 (GIVSVQSQNLPVGFFPLLVSYITSGRNLQEIVLNTSSTTPYQP) the chain is on the extracellular side. Residues 237-258 (DLIGLIATVGLTILIVYLVNTN) traverse the membrane as a helical segment. At 259–283 (IYIPVTTQRLRGIRTTVPLNFLYVS) the chain is on the cytoplasmic side. The chain crosses the membrane as a helical span at residues 284-305 (SIPVIFVSVLGADIQLFASLAN). Over 306 to 341 (SISNSASGILTDIANAFFFPPQGVPHSVYALVVDPV) the chain is Extracellular. A helical membrane pass occupies residues 342–361 (GAAIYAAVFIVLSIVFGMLW). Over 362-404 (IDVAGLDPKTQAEQMIRSGIEIPGMRTNPRIIEGILSKYIYAL) the chain is Cytoplasmic. A helical transmembrane segment spans residues 405–423 (GFFSSLIVGLIAVVATFLG). The Extracellular segment spans residues 424 to 426 (TYG). A helical transmembrane segment spans residues 427 to 441 (TGVGLLLAITIAMQY). The Cytoplasmic segment spans residues 442–463 (YNLLAYERTLEMYPLLKRIVGE).

The protein belongs to the SecY/SEC61-alpha family. As to quaternary structure, component of the Sec protein translocase complex. Heterotrimer consisting of alpha (SecY), beta (SecG) and gamma (SecE) subunits. The heterotrimers can form oligomers, although 1 heterotrimer is thought to be able to translocate proteins. Interacts with the ribosome. May interact with SecDF, and other proteins may be involved.

It localises to the cell membrane. In terms of biological role, the central subunit of the protein translocation channel SecYEG. Consists of two halves formed by TMs 1-5 and 6-10. These two domains form a lateral gate at the front which open onto the bilayer between TMs 2 and 7, and are clamped together by SecE at the back. The channel is closed by both a pore ring composed of hydrophobic SecY resides and a short helix (helix 2A) on the extracellular side of the membrane which forms a plug. The plug probably moves laterally to allow the channel to open. The ring and the pore may move independently. This is Protein translocase subunit SecY from Sulfolobus acidocaldarius (strain ATCC 33909 / DSM 639 / JCM 8929 / NBRC 15157 / NCIMB 11770).